Reading from the N-terminus, the 323-residue chain is Protein translocase subunit SecF (323 aa).

Topologically, residues 1-22 (MAQEYTVEQLNHGRKVYDFMRW) are cytoplasmic. Residues 23 to 43 (DYWAFGISGLLLIAAIVIMGV) traverse the membrane as a helical segment. The Periplasmic segment spans residues 44–142 (RGFNWGLDFT…FVGPSVGADL (99 aa)). Residues 143–163 (AQTGAMALMAALLSILVYVGF) form a helical membrane-spanning segment. The Cytoplasmic segment spans residues 164 to 170 (RFEWRLA). Residues 171 to 191 (AGVVIALAHDVIITLGILSLF) form a helical membrane-spanning segment. Residues 192–196 (HIEID) lie on the Periplasmic side of the membrane. The chain crosses the membrane as a helical span at residues 197-217 (LTIVASLMSVIGYSLNDSIVV). The Cytoplasmic segment spans residues 218-247 (SDRIRENFRKIRRGTPYEIFNVSLTQTLHR). The helical transmembrane segment at 248–270 (TLITSGTTLMVILMLYLFGGPVL) threads the bilayer. Topologically, residues 271–280 (EGFSLTMLIG) are periplasmic. The helical transmembrane segment at 281-301 (VSIGTASSIYVASALALKLGM) threads the bilayer. The Cytoplasmic segment spans residues 302–323 (KREHMLQQKVEKEGADQPSILP).

This sequence belongs to the SecD/SecF family. SecF subfamily. In terms of assembly, forms a complex with SecD. Part of the essential Sec protein translocation apparatus which comprises SecA, SecYEG and auxiliary proteins SecDF-YajC and YidC.

The protein resides in the cell inner membrane. Functionally, part of the Sec protein translocase complex. Interacts with the SecYEG preprotein conducting channel. SecDF uses the proton motive force (PMF) to complete protein translocation after the ATP-dependent function of SecA. The protein is Protein translocase subunit SecF of Escherichia coli O157:H7.